Reading from the N-terminus, the 335-residue chain is Methyltransferase pgmE (335 aa).

Belongs to the methyltransferase superfamily.

It participates in pigment biosynthesis. It functions in the pathway secondary metabolite biosynthesis. Its function is as follows. Methyltransferase; part of the gene cluster that mediates the biosynthesis of pleosporalin A, ascomycone A, as well as a third cryptic naphthoquinone derived pigment, all responsible for the coloration of conidia. Essential for the production of pleosporalin A, but not the 2 other final products. The pathway begins with the biosynthesis of the cyclized heptaketide 3-acetonyl-1,6,8-trihydroxy-2-naphthaldehyde by the NR-PKS pgmA. The C-6 hydroxyl group is further methylated by the O-methyltransferase pgmB to yield fusarubinaldehyde which is in turn oxidized by the cytochrome P450 monooxygenase pgmC at C-9. The C-1 hydroxyl group is then methylated spontaneously. Although pgmE, pgmD and pgmH are essential for the production of pleosporalin A, it is not the case for the 2 other final products and it remains difficult to assign a specific function to each enzyme. PgmF and pgmG seem not to be involved in pigment biosynthesis although they were regulated by the cluster-specific transcription factor pgmR. In Aspergillus terreus (strain NIH 2624 / FGSC A1156), this protein is Methyltransferase pgmE.